A 123-amino-acid polypeptide reads, in one-letter code: Small ribosomal subunit protein uS13 (123 aa).

A disordered region spans residues 92–123 (HRRGLPVRGQKTKTNARTRKGPKKLVVSRKKK).

Belongs to the universal ribosomal protein uS13 family. As to quaternary structure, part of the 30S ribosomal subunit. Forms a loose heterodimer with protein S19. Forms two bridges to the 50S subunit in the 70S ribosome.

Its function is as follows. Located at the top of the head of the 30S subunit, it contacts several helices of the 16S rRNA. In the 70S ribosome it contacts the 23S rRNA (bridge B1a) and protein L5 of the 50S subunit (bridge B1b), connecting the 2 subunits; these bridges are implicated in subunit movement. Contacts the tRNAs in the A and P-sites. In Clostridium tetani (strain Massachusetts / E88), this protein is Small ribosomal subunit protein uS13.